The following is a 169-amino-acid chain: Cell division inhibitor SulA (169 aa).

Residues 106 to 112 (ALRTGNY) are ftsZ binding. A lon protease binding region spans residues 162–169 (KIHSNLYH).

This sequence belongs to the SulA family. In terms of assembly, interacts with FtsZ. Post-translationally, is rapidly cleaved and degraded by the Lon protease once DNA damage is repaired.

In terms of biological role, component of the SOS system and an inhibitor of cell division. Accumulation of SulA causes rapid cessation of cell division and the appearance of long, non-septate filaments. In the presence of GTP, binds a polymerization-competent form of FtsZ in a 1:1 ratio, thus inhibiting FtsZ polymerization and therefore preventing it from participating in the assembly of the Z ring. This mechanism prevents the premature segregation of damaged DNA to daughter cells during cell division. The polypeptide is Cell division inhibitor SulA (Salmonella agona (strain SL483)).